The sequence spans 1400 residues: DNA-directed RNA polymerase subunit beta' (1400 aa).

Zn(2+)-binding residues include C71, C73, C86, and C89. 3 residues coordinate Mg(2+): D462, D464, and D466. Zn(2+) is bound by residues C811, C885, C892, and C895.

Belongs to the RNA polymerase beta' chain family. As to quaternary structure, the RNAP catalytic core consists of 2 alpha, 1 beta, 1 beta' and 1 omega subunit. When a sigma factor is associated with the core the holoenzyme is formed, which can initiate transcription. The cofactor is Mg(2+). Zn(2+) is required as a cofactor.

The enzyme catalyses RNA(n) + a ribonucleoside 5'-triphosphate = RNA(n+1) + diphosphate. Its function is as follows. DNA-dependent RNA polymerase catalyzes the transcription of DNA into RNA using the four ribonucleoside triphosphates as substrates. The chain is DNA-directed RNA polymerase subunit beta' from Brucella melitensis biotype 1 (strain ATCC 23456 / CCUG 17765 / NCTC 10094 / 16M).